We begin with the raw amino-acid sequence, 88 residues long: Large ribosomal subunit protein bL27 (88 aa).

The disordered stretch occupies residues 1–21 (MAHKKGTGSTRNGRDSNAKRL).

The protein belongs to the bacterial ribosomal protein bL27 family.

The protein is Large ribosomal subunit protein bL27 of Parasynechococcus marenigrum (strain WH8102).